Reading from the N-terminus, the 391-residue chain is uncharacterized protein (391 aa).

Transmembrane regions (helical) follow at residues 7 to 27 (FILVLLVSISGFSQGMLLPVI), 39 to 59 (AINGLHATGLYIGVLLASPFM), 66 to 88 (LGFKPLIVMGGSIVILSLFGFIW), 92 to 111 (VWVWFLLRLFIGIGDHMLHF), 131 to 151 (SIYGLSFGLGFAAGPFMVPLV), 156 to 176 (SLPFIVSGCISLFAWLFVFFL), 197 to 217 (FYQAMLFGWVAFMPTFGYGFL), 239 to 259 (VAIILPAFAIGSIIFQFPLGI), 269 to 289 (VLLVILLTGALCFFIAGVFPS), 292 to 312 (VIGGCFFIAGMAVGSTFTLGI), 329 to 349 (LLCGITFSLGSILGPVAGGWY), and 356 to 376 (ANLFYFITLTLSSVWLALVLG).

It belongs to the major facilitator superfamily.

The protein resides in the cell membrane. This is an uncharacterized protein from Bacillus subtilis (strain 168).